We begin with the raw amino-acid sequence, 72 residues long: Penaeidin-2b (72 aa).

A signal peptide spans 1 to 21 (MRLVVCLVFLASFALVCQGEA). 3 cysteine pairs are disulfide-bonded: cysteine 45–cysteine 59, cysteine 48–cysteine 66, and cysteine 60–cysteine 67. Residue lysine 71 is modified to Lysine amide.

Belongs to the penaeidin family.

Its subcellular location is the cytoplasmic granule. Functionally, antibacterial and antifungal activity. Presents chitin-binding activity. This chain is Penaeidin-2b, found in Penaeus vannamei (Whiteleg shrimp).